Here is a 490-residue protein sequence, read N- to C-terminus: Glutamyl-tRNA(Gln) amidotransferase subunit A (490 aa).

Active-site charge relay system residues include K78 and S158. Residues 131–159 (SNETSRFGPPINPWRRKGDNAGLTPGGSS) form a disordered region. Catalysis depends on S182, which acts as the Acyl-ester intermediate.

It belongs to the amidase family. GatA subfamily. As to quaternary structure, heterotrimer of A, B and C subunits.

It carries out the reaction L-glutamyl-tRNA(Gln) + L-glutamine + ATP + H2O = L-glutaminyl-tRNA(Gln) + L-glutamate + ADP + phosphate + H(+). Allows the formation of correctly charged Gln-tRNA(Gln) through the transamidation of misacylated Glu-tRNA(Gln) in organisms which lack glutaminyl-tRNA synthetase. The reaction takes place in the presence of glutamine and ATP through an activated gamma-phospho-Glu-tRNA(Gln). This is Glutamyl-tRNA(Gln) amidotransferase subunit A from Hyphomonas neptunium (strain ATCC 15444).